The following is a 577-amino-acid chain: Isocitrate dehydrogenase kinase/phosphatase (577 aa).

ATP-binding positions include A318–M324 and K339. D374 is a catalytic residue.

The protein belongs to the AceK family.

The protein resides in the cytoplasm. The catalysed reaction is L-seryl-[isocitrate dehydrogenase] + ATP = O-phospho-L-seryl-[isocitrate dehydrogenase] + ADP + H(+). Functionally, bifunctional enzyme which can phosphorylate or dephosphorylate isocitrate dehydrogenase (IDH) on a specific serine residue. This is a regulatory mechanism which enables bacteria to bypass the Krebs cycle via the glyoxylate shunt in response to the source of carbon. When bacteria are grown on glucose, IDH is fully active and unphosphorylated, but when grown on acetate or ethanol, the activity of IDH declines drastically concomitant with its phosphorylation. The polypeptide is Isocitrate dehydrogenase kinase/phosphatase (Pseudomonas aeruginosa (strain ATCC 15692 / DSM 22644 / CIP 104116 / JCM 14847 / LMG 12228 / 1C / PRS 101 / PAO1)).